A 390-amino-acid chain; its full sequence is LL-diaminopimelate aminotransferase 2 (390 aa).

Residues Tyr13 and Gly38 each contribute to the substrate site. Pyridoxal 5'-phosphate-binding positions include Tyr67, 102–103, Tyr127, Asn177, Tyr208, and 236–238; these read SK and SLS. Substrate-binding residues include Lys103, Tyr127, and Asn177. Lys239 is subject to N6-(pyridoxal phosphate)lysine. Pyridoxal 5'-phosphate is bound at residue Arg247. Substrate is bound at residue Arg365.

The protein belongs to the class-I pyridoxal-phosphate-dependent aminotransferase family. LL-diaminopimelate aminotransferase subfamily. Homodimer. Pyridoxal 5'-phosphate is required as a cofactor.

It catalyses the reaction (2S,6S)-2,6-diaminopimelate + 2-oxoglutarate = (S)-2,3,4,5-tetrahydrodipicolinate + L-glutamate + H2O + H(+). It participates in amino-acid biosynthesis; L-lysine biosynthesis via DAP pathway; LL-2,6-diaminopimelate from (S)-tetrahydrodipicolinate (aminotransferase route): step 1/1. Involved in the synthesis of meso-diaminopimelate (m-DAP or DL-DAP), required for both lysine and peptidoglycan biosynthesis. Catalyzes the direct conversion of tetrahydrodipicolinate to LL-diaminopimelate. The chain is LL-diaminopimelate aminotransferase 2 from Trichormus variabilis (strain ATCC 29413 / PCC 7937) (Anabaena variabilis).